We begin with the raw amino-acid sequence, 843 residues long: MPLSYPHFRKLLLLDDEAGPLEEELPRLADEGLNRRVAEDLNLQLPNVSIPWTHKVGNFTGLYSSTVPAFNPHWLTPSFPDIHLHQDLISKCEQFVGPLTKNELRRLKLIMPARFFPKLTKYFPLEKGIKPYYPEHAVNHYFKTRHYLHTLWKAGILYKRESTRSASFCGSPYSWEQELQHGSTSLNDKKGHGTESLCAQSTGILSRTSAGSSFQSKFQQSRLGLQQKQGHLANGKQGRSGRLRSRVHTPTRWPVGVEPSGTRCSNNLASRSASCFHQSAVREEANPSLSTSKRHTSTGNAVELNPVPPGLVGSEGKGSVFSCWWLQFRDAEPCSDYCLSHIINLLEDWGPCYEHGQHHIRTPRTPARVTGGVFLVDKNPHNTTESRLVVDFSQFSRGTTRVSWPKFAVPNLQSLTNLLSSNLSWLSLDVSAAFYHLPLHPAAMPHLLVGSSGLSRYVARLSSNSRIYDHQHGTMQNLHNSCSRNLYVSLLLLFQTLGRKLHLYSHPIILGFRKIPMGVGLSPFLLAQFTSAICSVVRRAFPHCLAFSYMDDLVLGAKSVQHLESLYTAVTNFLLSVGIHLNTSKTKRWGYNLHFMGYVIGSWGALPQDHIVHKIKECFRKLPVNRPIDWKVCQRIVGLLGFAAPFTQCGYPALMPLYTCITAKQAFVFSPTYKAFLCKQYMNLYPVARQRPGLCQVFADATPTGWGLAIGHQRMRGTFVAPLPIHTAELLAACFARSRSGANIIGTDNSVVLSRKYTSFPWLLGCAANWILRGTSFVYVPSALNPADDPSRGRLGLYRPLLRLPFQPTTGRTSLYADSPSVPSHLPVRVHFASPLHVAWRPP.

A terminal protein domain (TP) region spans residues 1–177 (MPLSYPHFRK…FCGSPYSWEQ (177 aa)). The spacer stretch occupies residues 178–346 (ELQHGSTSLN…YCLSHIINLL (169 aa)). The segment at 284-308 (EANPSLSTSKRHTSTGNAVELNPVP) is disordered. Residues 347 to 690 (EDWGPCYEHG…YMNLYPVARQ (344 aa)) form a polymerase/reverse transcriptase domain (RT) region. In terms of domain architecture, Reverse transcriptase spans 357-600 (QHHIRTPRTP…YNLHFMGYVI (244 aa)). Mg(2+) is bound by residues Asp429, Asp551, and Asp552.

The protein belongs to the hepadnaviridae P protein family.

It carries out the reaction DNA(n) + a 2'-deoxyribonucleoside 5'-triphosphate = DNA(n+1) + diphosphate. It catalyses the reaction Endonucleolytic cleavage to 5'-phosphomonoester.. Activated by host HSP70 and HSP40 in vitro to be able to bind the epsilon loop of the pgRNA. Because deletion of the RNase H region renders the protein partly chaperone-independent, the chaperones may be needed indirectly to relieve occlusion of the RNA-binding site by this domain. Inhibited by several reverse-transcriptase inhibitors: Lamivudine, Adefovir and Entecavir. In terms of biological role, multifunctional enzyme that converts the viral RNA genome into dsDNA in viral cytoplasmic capsids. This enzyme displays a DNA polymerase activity that can copy either DNA or RNA templates, and a ribonuclease H (RNase H) activity that cleaves the RNA strand of RNA-DNA heteroduplexes in a partially processive 3'- to 5'-endonucleasic mode. Neo-synthesized pregenomic RNA (pgRNA) are encapsidated together with the P protein, and reverse-transcribed inside the nucleocapsid. Initiation of reverse-transcription occurs first by binding the epsilon loop on the pgRNA genome, and is initiated by protein priming, thereby the 5'-end of (-)DNA is covalently linked to P protein. Partial (+)DNA is synthesized from the (-)DNA template and generates the relaxed circular DNA (RC-DNA) genome. After budding and infection, the RC-DNA migrates in the nucleus, and is converted into a plasmid-like covalently closed circular DNA (cccDNA). The activity of P protein does not seem to be necessary for cccDNA generation, and is presumably released from (+)DNA by host nuclear DNA repair machinery. In Homo sapiens (Human), this protein is Protein P.